The primary structure comprises 330 residues: Beta-ketoacyl-[acyl-carrier-protein] synthase III (330 aa).

Active-site residues include Cys-111 and His-249. Residues 250 to 254 (QANTR) are ACP-binding. Asn-279 is a catalytic residue.

Belongs to the thiolase-like superfamily. FabH family. Homodimer.

The protein localises to the cytoplasm. It carries out the reaction malonyl-[ACP] + acetyl-CoA + H(+) = 3-oxobutanoyl-[ACP] + CO2 + CoA. The protein operates within lipid metabolism; fatty acid biosynthesis. Its function is as follows. Catalyzes the condensation reaction of fatty acid synthesis by the addition to an acyl acceptor of two carbons from malonyl-ACP. Catalyzes the first condensation reaction which initiates fatty acid synthesis and may therefore play a role in governing the total rate of fatty acid production. Possesses both acetoacetyl-ACP synthase and acetyl transacylase activities. Its substrate specificity determines the biosynthesis of branched-chain and/or straight-chain of fatty acids. In Pseudomonas aeruginosa (strain LESB58), this protein is Beta-ketoacyl-[acyl-carrier-protein] synthase III.